The following is a 211-amino-acid chain: Large ribosomal subunit protein uL4 (211 aa).

Residues 50-77 are disordered; it reads STLTKGEVSGGGKKPYKQKHTGKARQGS. The span at 63 to 72 shows a compositional bias: basic residues; that stretch reads KPYKQKHTGK.

Belongs to the universal ribosomal protein uL4 family. In terms of assembly, part of the 50S ribosomal subunit.

Functionally, one of the primary rRNA binding proteins, this protein initially binds near the 5'-end of the 23S rRNA. It is important during the early stages of 50S assembly. It makes multiple contacts with different domains of the 23S rRNA in the assembled 50S subunit and ribosome. In terms of biological role, forms part of the polypeptide exit tunnel. This Mycoplasma genitalium (strain ATCC 33530 / DSM 19775 / NCTC 10195 / G37) (Mycoplasmoides genitalium) protein is Large ribosomal subunit protein uL4.